A 229-amino-acid chain; its full sequence is Uridylate cyclase (229 aa).

A Guanylate cyclase domain is found at 47–178 (TVLYADLDGS…RAANYAAKLT (132 aa)). Tyrosine 50 contacts a ribonucleoside 5'-triphosphate. Residues aspartate 52 and aspartate 96 each contribute to the Mn(2+) site. Position 97 (arginine 97) interacts with a ribonucleoside 5'-triphosphate.

It belongs to the adenylyl cyclase class-4/guanylyl cyclase family. Pyrimidine cyclase subfamily. Homodimer. Mn(2+) serves as cofactor.

It localises to the cytoplasm. The catalysed reaction is UTP = 3',5'-cyclic UMP + diphosphate. In terms of biological role, pycsar (pyrimidine cyclase system for antiphage resistance) provides immunity against bacteriophage. The pyrimidine cyclase (PycC) synthesizes cyclic nucleotides in response to infection; these serve as specific second messenger signals. The signals activate the adjacent effector, leading to bacterial cell death and abortive phage infection. A clade B Pycsar system. The pyrimidine cyclase gene of a two-gene Pycsar system, generates cyclic UMP (cUMP) from UTP, has little to no activity on ATP, CTP or GTP. Expression of this and adjacent effector BcPycTIR (AC A0A0J5WTU0) probably confers resistance to bacteriophage. The genes are probably only expressed in response to bacteriophage infection. The polypeptide is Uridylate cyclase (Burkholderia cepacia (Pseudomonas cepacia)).